An 85-amino-acid polypeptide reads, in one-letter code: U4-theraphotoxin-Hhn1o (85 aa).

Positions 1–22 (MKVTLIAILTCAAVLVLHTTAA) are cleaved as a signal peptide. A propeptide spanning residues 23–48 (EELEAESQLMEVGMPDTELAAVDEER) is cleaved from the precursor. 3 disulfides stabilise this stretch: Cys-52/Cys-66, Cys-56/Cys-77, and Cys-71/Cys-82.

This sequence belongs to the neurotoxin 12 (Hwtx-2) family. 02 (Hwtx-2) subfamily. Expressed by the venom gland.

Its subcellular location is the secreted. Functionally, postsynaptic neurotoxin. This Cyriopagopus hainanus (Chinese bird spider) protein is U4-theraphotoxin-Hhn1o.